A 134-amino-acid chain; its full sequence is ATP synthase epsilon chain, chloroplastic (134 aa).

Belongs to the ATPase epsilon chain family. As to quaternary structure, F-type ATPases have 2 components, CF(1) - the catalytic core - and CF(0) - the membrane proton channel. CF(1) has five subunits: alpha(3), beta(3), gamma(1), delta(1), epsilon(1). CF(0) has three main subunits: a, b and c.

Its subcellular location is the plastid. The protein localises to the chloroplast thylakoid membrane. Its function is as follows. Produces ATP from ADP in the presence of a proton gradient across the membrane. The chain is ATP synthase epsilon chain, chloroplastic from Pyropia yezoensis (Susabi-nori).